The primary structure comprises 436 residues: Trigger factor (436 aa).

Residues 161 to 246 enclose the PPIase FKBP-type domain; sequence GDQVNIDFVG…VNSVAAPQLP (86 aa).

The protein belongs to the FKBP-type PPIase family. Tig subfamily.

It is found in the cytoplasm. It carries out the reaction [protein]-peptidylproline (omega=180) = [protein]-peptidylproline (omega=0). Its function is as follows. Involved in protein export. Acts as a chaperone by maintaining the newly synthesized protein in an open conformation. Functions as a peptidyl-prolyl cis-trans isomerase. The sequence is that of Trigger factor from Stutzerimonas stutzeri (strain A1501) (Pseudomonas stutzeri).